A 768-amino-acid polypeptide reads, in one-letter code: DNA ligase 1 (768 aa).

The interval 42 to 139 (VEVSQSSSDS…KEPPLESNAR (98 aa)) is disordered. The segment covering 52–99 (KNVDGRSTSEKRKVESVKLVDESKHNNHDDTGTQNVERENNIVSEAKK) has biased composition (basic and acidic residues). Residues 104 to 124 (GSSSSSSDAVSSNNDSGASTP) show a composition bias toward low complexity. The segment at 309 to 318 (KLRLQLAEKT) is interaction with target DNA. Residue Glu-414 participates in ATP binding. The active-site N6-AMP-lysine intermediate is Lys-416. Arg-421 and Arg-437 together coordinate ATP. Glu-469 is a binding site for Mg(2+). Positions 490-492 (KRK) are interaction with target DNA. Mg(2+) is bound at residue Glu-568. Lys-573, Arg-587, and Lys-593 together coordinate ATP.

The protein belongs to the ATP-dependent DNA ligase family. The cofactor is Mg(2+).

Its subcellular location is the nucleus. It catalyses the reaction ATP + (deoxyribonucleotide)n-3'-hydroxyl + 5'-phospho-(deoxyribonucleotide)m = (deoxyribonucleotide)n+m + AMP + diphosphate.. Its function is as follows. DNA ligase that seals nicks in double-stranded DNA during DNA replication, DNA recombination and DNA repair. The sequence is that of DNA ligase 1 (cdc17) from Schizosaccharomyces pombe (strain 972 / ATCC 24843) (Fission yeast).